The chain runs to 133 residues: Protransforming growth factor alpha (133 aa).

The N-terminal stretch at Met1–Leu23 is a signal peptide. Positions Glu24–Ala38 are cleaved as a propeptide — removed in mature form. Topologically, residues Glu24–Gln97 are extracellular. N-linked (GlcNAc...) asparagine glycosylation is present at Asn25. Residues His42–Glu82 form the EGF-like domain. 3 cysteine pairs are disulfide-bonded: Cys46–Cys59, Cys54–Cys70, and Cys72–Cys81. Residues Val89–Pro133 constitute a propeptide, removed in mature form. A helical transmembrane segment spans residues Ala98–Ile120. The Cytoplasmic portion of the chain corresponds to His121–Pro133.

In terms of assembly, interacts with the PDZ domains of MAGI3, SDCBP and SNTA1. The interaction with SDCBP, is required for the targeting to the cell surface. In the endoplasmic reticulum, in its immature form (i.e. with a prosegment and lacking full N-glycosylation), interacts with CNIH. In the Golgi apparatus, may form a complex with CNIH and GORASP2. Interacts (via cytoplasmic C-terminal domain) with NKD2. In terms of tissue distribution, skin.

It is found in the secreted. The protein resides in the extracellular space. It localises to the cell membrane. Functionally, TGF alpha is a mitogenic polypeptide that is able to bind to the EGF receptor/EGFR and to act synergistically with TGF beta to promote anchorage-independent cell proliferation in soft agar. This chain is Protransforming growth factor alpha (TGFA), found in Ovis aries (Sheep).